The following is a 1898-amino-acid chain: 1-phosphatidylinositol 4,5-bisphosphate phosphodiesterase epsilon-1 (1898 aa).

In terms of domain architecture, Ras-GEF spans 66–328 (FPEEVAFQLS…EREQKEKEAK (263 aa)). Disordered regions lie at residues 419-444 (QPLDSGRGAPSPMPSGRTPGTGGVGV) and 569-722 (TNTN…GPSG). Over residues 569 to 583 (TNTNATRPNDSSLSS) the composition is skewed to polar residues. Residues 590-605 (SRLKNLKNAMQKKLRG) are compositionally biased toward basic residues. Low complexity-rich tracts occupy residues 625–637 (PPSIKSQISSQSG), 666–687 (YTPRSRTPTSSSYGGRSVGGRS), and 701–716 (SGSISSSGQMSIQVSG). Residues 910-1058 (EDLRYPLSHY…MKNKILIKNK (149 aa)) form the PI-PLC X-box domain. Active-site residues include His-925 and His-970. 2 disordered regions span residues 1082 to 1178 (QLNL…DRKT) and 1238 to 1274 (EEGPASASLSFSSRARTPSNLLNTPAPPRRQRSSTQL). Over residues 1098–1123 (TVDEVEDDDLDEFLDDEENEEDDQEE) the composition is skewed to acidic residues. Residues 1124-1144 (VQVRSEKEDSPKTSKRAEKSA) show a composition bias toward basic and acidic residues. Polar residues predominate over residues 1146-1155 (NIKQQDSLCS). Low complexity-rich tracts occupy residues 1163 to 1172 (KPSTSKTTSK) and 1242 to 1253 (ASASLSFSSRAR). The PI-PLC Y-box domain occupies 1279 to 1385 (AAEFLGSVRA…CGYQLKPRCL (107 aa)). Positions 1391-1517 (LLYNKFLPLS…PLRTPTNLPI (127 aa)) constitute a C2 domain. The Ras-associating 1 domain maps to 1570–1665 (QIFVLRITGA…RRFVLRKKGS (96 aa)). Over residues 1680–1694 (GTSGSSTSVSPSPLT) the composition is skewed to low complexity. Positions 1680-1711 (GTSGSSTSVSPSPLTKDGHVKSASSNQLHGRS) are disordered. Positions 1738-1857 (DTFLVCVHNV…GRFVLENRKD (120 aa)) constitute a Ras-associating 2 domain.

Interacts (via Ras-associating domain 1) with let-60 (in GTP-bound form). It depends on Ca(2+) as a cofactor. Expressed in the spermatheca, vulva, intestine and excretory cells. Expressed in sensory neurons AWC, AFD, ASE, ASG and BAG, interneurons, ventral nerve cord neurons and tail neurons. Expressed in body muscles.

It catalyses the reaction a 1,2-diacyl-sn-glycero-3-phospho-(1D-myo-inositol-4,5-bisphosphate) + H2O = 1D-myo-inositol 1,4,5-trisphosphate + a 1,2-diacyl-sn-glycerol + H(+). In terms of biological role, the production of the second messenger molecules diacylglycerol (DAG) and inositol 1,4,5-trisphosphate (IP3) is mediated by activated phosphatidylinositol-specific phospholipase C enzymes. plc-1 is a bifunctional enzyme which also regulates small GTPases of the Ras superfamily through its Ras guanine-exchange factor (RasGEF) activity. By activating IP3 receptor itr-1-mediated intracellular Ca(2+) release via the production of IP3, regulates ovulation by controlling contraction and/or dilation of the distal spermatheca valve during oocyte entry and the timing of the dilation of the spermatheca-uterine valve during oocyte exit. In a similar manner, plays an essential role in epidermal morphogenesis by regulating migration of epidermal cells during ventral closure and to a lesser extent by regulating epidermal cell dorsal intercalation. Involved in the immune response to S.aureus bacterium by activating kinase dkf-1 via the production of DAG which in turn activates transcription factor hlh-30. In ASER neurons, required for adjusting the orientation behavior in salt gradients based on the memory of previous salt concentration encountered. The protein is 1-phosphatidylinositol 4,5-bisphosphate phosphodiesterase epsilon-1 of Caenorhabditis elegans.